Consider the following 90-residue polypeptide: ATP-dependent Clp protease adapter protein ClpS (90 aa).

This sequence belongs to the ClpS family. As to quaternary structure, binds to the N-terminal domain of the chaperone ClpA.

Its function is as follows. Involved in the modulation of the specificity of the ClpAP-mediated ATP-dependent protein degradation. The polypeptide is ATP-dependent Clp protease adapter protein ClpS (Helicobacter pylori (strain J99 / ATCC 700824) (Campylobacter pylori J99)).